Here is a 143-residue protein sequence, read N- to C-terminus: uncharacterized protein (143 aa).

In terms of domain architecture, Rhodanese spans 50 to 143; it reads NKEDAVVVDL…GENLPLVRGK (94 aa). Lysine 91 carries the N6-acetyllysine modification.

This is an uncharacterized protein from Escherichia coli O6:H1 (strain CFT073 / ATCC 700928 / UPEC).